A 463-amino-acid chain; its full sequence is Sugar transporter ERD6-like 7 (463 aa).

Helical transmembrane passes span 26 to 46 (WMVYLSTFVAVCGSFAFGSCA), 69 to 89 (LFGSLLTFGAMIGAITSGPIA), 103 to 123 (AFCVVGWLAIIFAKGVVALDL), 126 to 146 (LATGYGMGAFSYVVPIFIAEI), 157 to 177 (TLNQILICTGVSVSFIIGTLV), 181 to 201 (VLALIGIIPCAASFLGLFFIP), 264 to 284 (VLIAFGLMVFQQFGGINGICF), 299 to 319 (LGMIIYAVLQVVITALNAPIV), 327 to 347 (LLLVSATGLVIGCLIAAVSFY), 357 to 377 (AVPVLAVVGIMVYIGSFSAGM), 396 to 416 (VAGGMATLVNWFGAWAVSYTF), and 426 to 446 (GTFLIYAAINALAIVFVIAIV).

The protein belongs to the major facilitator superfamily. Sugar transporter (TC 2.A.1.1) family.

It is found in the membrane. Sugar transporter. The protein is Sugar transporter ERD6-like 7 of Arabidopsis thaliana (Mouse-ear cress).